Here is a 675-residue protein sequence, read N- to C-terminus: Methionine--tRNA ligase (675 aa).

The 'HIGH' region signature appears at 15 to 25 (PYANGPIHLGH). Zn(2+)-binding residues include C146, C149, C159, and C162. The 'KMSKS' region signature appears at 332–336 (KMSKS). K335 contacts ATP. The tRNA-binding domain occupies 574 to 675 (DFAKIDLRVA…AGAKPGMRVK (102 aa)).

This sequence belongs to the class-I aminoacyl-tRNA synthetase family. MetG type 1 subfamily. As to quaternary structure, homodimer. Zn(2+) serves as cofactor.

The protein localises to the cytoplasm. It carries out the reaction tRNA(Met) + L-methionine + ATP = L-methionyl-tRNA(Met) + AMP + diphosphate. Is required not only for elongation of protein synthesis but also for the initiation of all mRNA translation through initiator tRNA(fMet) aminoacylation. This Shewanella amazonensis (strain ATCC BAA-1098 / SB2B) protein is Methionine--tRNA ligase.